Reading from the N-terminus, the 543-residue chain is NXPE family member 4 (543 aa).

The signal sequence occupies residues 1–26 (MKTLASRKSLWMLLFIVIFWVSFTVF). 3 N-linked (GlcNAc...) asparagine glycosylation sites follow: Asn91, Asn159, and Asn223.

The protein belongs to the NXPE family.

The protein localises to the secreted. This is NXPE family member 4 (Nxpe4) from Mus musculus (Mouse).